The primary structure comprises 508 residues: Photosystem II CP47 reaction center protein (508 aa).

Helical transmembrane passes span 21-36 (SVHI…WAGS), 101-115 (IVFS…IWHW), 140-156 (GIHL…SGAF), 203-218 (IAAG…FHLS), 237-252 (VLSS…AFIV), and 457-472 (TFAL…HGAR).

Belongs to the PsbB/PsbC family. PsbB subfamily. PSII is composed of 1 copy each of membrane proteins PsbA, PsbB, PsbC, PsbD, PsbE, PsbF, PsbH, PsbI, PsbJ, PsbK, PsbL, PsbM, PsbT, PsbX, PsbY, PsbZ, Psb30/Ycf12, at least 3 peripheral proteins of the oxygen-evolving complex and a large number of cofactors. It forms dimeric complexes. The cofactor is Binds multiple chlorophylls. PSII binds additional chlorophylls, carotenoids and specific lipids..

Its subcellular location is the plastid. The protein localises to the chloroplast thylakoid membrane. Functionally, one of the components of the core complex of photosystem II (PSII). It binds chlorophyll and helps catalyze the primary light-induced photochemical processes of PSII. PSII is a light-driven water:plastoquinone oxidoreductase, using light energy to abstract electrons from H(2)O, generating O(2) and a proton gradient subsequently used for ATP formation. The sequence is that of Photosystem II CP47 reaction center protein from Cycas taitungensis (Prince sago).